A 271-amino-acid chain; its full sequence is Ribosomal RNA small subunit methyltransferase A (271 aa).

The S-adenosyl-L-methionine site is built by Asn-22, Leu-24, Gly-49, Glu-70, Asp-96, and Asn-116.

It belongs to the class I-like SAM-binding methyltransferase superfamily. rRNA adenine N(6)-methyltransferase family. RsmA subfamily.

It is found in the cytoplasm. The enzyme catalyses adenosine(1518)/adenosine(1519) in 16S rRNA + 4 S-adenosyl-L-methionine = N(6)-dimethyladenosine(1518)/N(6)-dimethyladenosine(1519) in 16S rRNA + 4 S-adenosyl-L-homocysteine + 4 H(+). Specifically dimethylates two adjacent adenosines (A1518 and A1519) in the loop of a conserved hairpin near the 3'-end of 16S rRNA in the 30S particle. May play a critical role in biogenesis of 30S subunits. In Sphingopyxis alaskensis (strain DSM 13593 / LMG 18877 / RB2256) (Sphingomonas alaskensis), this protein is Ribosomal RNA small subunit methyltransferase A.